Here is a 954-residue protein sequence, read N- to C-terminus: Glycine dehydrogenase (decarboxylating) (954 aa).

Residue K704 is modified to N6-(pyridoxal phosphate)lysine.

The protein belongs to the GcvP family. The glycine cleavage system is composed of four proteins: P, T, L and H. The cofactor is pyridoxal 5'-phosphate.

It catalyses the reaction N(6)-[(R)-lipoyl]-L-lysyl-[glycine-cleavage complex H protein] + glycine + H(+) = N(6)-[(R)-S(8)-aminomethyldihydrolipoyl]-L-lysyl-[glycine-cleavage complex H protein] + CO2. In terms of biological role, the glycine cleavage system catalyzes the degradation of glycine. The P protein binds the alpha-amino group of glycine through its pyridoxal phosphate cofactor; CO(2) is released and the remaining methylamine moiety is then transferred to the lipoamide cofactor of the H protein. This chain is Glycine dehydrogenase (decarboxylating), found in Allorhizobium ampelinum (strain ATCC BAA-846 / DSM 112012 / S4) (Agrobacterium vitis (strain S4)).